A 233-amino-acid polypeptide reads, in one-letter code: Large ribosomal subunit protein uL1 (233 aa).

This sequence belongs to the universal ribosomal protein uL1 family. As to quaternary structure, part of the 50S ribosomal subunit.

Binds directly to 23S rRNA. The L1 stalk is quite mobile in the ribosome, and is involved in E site tRNA release. Functionally, protein L1 is also a translational repressor protein, it controls the translation of the L11 operon by binding to its mRNA. This is Large ribosomal subunit protein uL1 from Thermotoga sp. (strain RQ2).